Here is a 307-residue protein sequence, read N- to C-terminus: Small ribosomal subunit biogenesis GTPase RsgA (307 aa).

The segment at 1-21 (MPSEHPFSDGISTPNPKETMN) is disordered. The segment covering 10 to 21 (GISTPNPKETMN) has biased composition (polar residues). A CP-type G domain is found at 85–242 (RQDAWKTKLI…LIDSPGLQEF (158 aa)). Residues 135–138 (NKAD) and 184–192 (GQSGMGKST) each bind GTP. 4 residues coordinate Zn(2+): Cys-266, Cys-271, His-273, and Cys-279.

It belongs to the TRAFAC class YlqF/YawG GTPase family. RsgA subfamily. Monomer. Associates with 30S ribosomal subunit, binds 16S rRNA. It depends on Zn(2+) as a cofactor.

Its subcellular location is the cytoplasm. Its function is as follows. One of several proteins that assist in the late maturation steps of the functional core of the 30S ribosomal subunit. Helps release RbfA from mature subunits. May play a role in the assembly of ribosomal proteins into the subunit. Circularly permuted GTPase that catalyzes slow GTP hydrolysis, GTPase activity is stimulated by the 30S ribosomal subunit. The polypeptide is Small ribosomal subunit biogenesis GTPase RsgA (Neisseria gonorrhoeae (strain ATCC 700825 / FA 1090)).